Here is a 357-residue protein sequence, read N- to C-terminus: UDP-N-acetylglucosamine--N-acetylmuramyl-(pentapeptide) pyrophosphoryl-undecaprenol N-acetylglucosamine transferase (357 aa).

Residues T12–G14, N124, R162, S190, I243, A262–E267, and Q288 each bind UDP-N-acetyl-alpha-D-glucosamine.

It belongs to the glycosyltransferase 28 family. MurG subfamily.

It localises to the cell inner membrane. The catalysed reaction is di-trans,octa-cis-undecaprenyl diphospho-N-acetyl-alpha-D-muramoyl-L-alanyl-D-glutamyl-meso-2,6-diaminopimeloyl-D-alanyl-D-alanine + UDP-N-acetyl-alpha-D-glucosamine = di-trans,octa-cis-undecaprenyl diphospho-[N-acetyl-alpha-D-glucosaminyl-(1-&gt;4)]-N-acetyl-alpha-D-muramoyl-L-alanyl-D-glutamyl-meso-2,6-diaminopimeloyl-D-alanyl-D-alanine + UDP + H(+). It functions in the pathway cell wall biogenesis; peptidoglycan biosynthesis. Cell wall formation. Catalyzes the transfer of a GlcNAc subunit on undecaprenyl-pyrophosphoryl-MurNAc-pentapeptide (lipid intermediate I) to form undecaprenyl-pyrophosphoryl-MurNAc-(pentapeptide)GlcNAc (lipid intermediate II). This chain is UDP-N-acetylglucosamine--N-acetylmuramyl-(pentapeptide) pyrophosphoryl-undecaprenol N-acetylglucosamine transferase, found in Alcanivorax borkumensis (strain ATCC 700651 / DSM 11573 / NCIMB 13689 / SK2).